A 1370-amino-acid chain; its full sequence is DNA-directed RNA polymerase subunit beta (1370 aa).

It belongs to the RNA polymerase beta chain family. As to quaternary structure, the RNAP catalytic core consists of 2 alpha, 1 beta, 1 beta' and 1 omega subunit. When a sigma factor is associated with the core the holoenzyme is formed, which can initiate transcription.

It catalyses the reaction RNA(n) + a ribonucleoside 5'-triphosphate = RNA(n+1) + diphosphate. In terms of biological role, DNA-dependent RNA polymerase catalyzes the transcription of DNA into RNA using the four ribonucleoside triphosphates as substrates. This is DNA-directed RNA polymerase subunit beta from Bordetella parapertussis (strain 12822 / ATCC BAA-587 / NCTC 13253).